A 254-amino-acid polypeptide reads, in one-letter code: Methyltransferase-like protein 23 (254 aa).

The interval 1 to 27 (MKSFIFRQNPRKQQQEQNNLVDYSDSD) is disordered. The segment covering 11 to 21 (RKQQQEQNNLV) has biased composition (polar residues).

This sequence belongs to the methyltransferase superfamily. METTL23 family.

Probable methyltransferase. This Dictyostelium discoideum (Social amoeba) protein is Methyltransferase-like protein 23.